Here is a 364-residue protein sequence, read N- to C-terminus: MRVLAAMSGGVDSAVAAARAVAAGHDVVGVHLALSAEPGTLRTGSRGCCSKEDAGDARRAADVLGIPFYVWDFADRFKEDVIDDFVASYAAGETPNPCLRCNEKIKFAALADRAIALGFDAVATGHYAQLENGVLRRAVDADKDQSYVLGVLTAEQLSRAMFPVGDTPKDRIREEAAERGLAVANKPDSHDICFIPSGDTRAFLGARIGVRPGSVVDADSGEVLAEHEGVHGFTIGQRKGLGVQGPAADGQPRYVTSIEPDTGTVRVGSARNLEVDAITADRAVWTSGSTPVGPVECTVQVRAHGGLAEAVAEAVDGGIAISLREPLTGVAKGQAVVLYRTDPAGDIVLGSGTISGTDARPNTQ.

Residues 6 to 13 and Leu-32 contribute to the ATP site; that span reads AMSGGVDS. Residue Cys-101 is the Nucleophile of the active site. Cys-101 and Cys-193 are joined by a disulfide. Position 125 (Gly-125) interacts with ATP. The segment at 143–145 is interaction with tRNA; it reads KDQ. Cys-193 acts as the Cysteine persulfide intermediate in catalysis.

It belongs to the MnmA/TRMU family.

Its subcellular location is the cytoplasm. It catalyses the reaction S-sulfanyl-L-cysteinyl-[protein] + uridine(34) in tRNA + AH2 + ATP = 2-thiouridine(34) in tRNA + L-cysteinyl-[protein] + A + AMP + diphosphate + H(+). Catalyzes the 2-thiolation of uridine at the wobble position (U34) of tRNA, leading to the formation of s(2)U34. This is tRNA-specific 2-thiouridylase MnmA from Rhodococcus jostii (strain RHA1).